The chain runs to 474 residues: tRNA-2-methylthio-N(6)-dimethylallyladenosine synthase (474 aa).

The 118-residue stretch at 3-120 folds into the MTTase N-terminal domain; it reads KKLLIKTWGC…LPEMIKQSQS (118 aa). Residues cysteine 12, cysteine 49, cysteine 83, cysteine 157, cysteine 161, and cysteine 164 each coordinate [4Fe-4S] cluster. The 233-residue stretch at 143–375 folds into the Radical SAM core domain; it reads RAEGATAFVS…QQQINAQAMR (233 aa). In terms of domain architecture, TRAM spans 378 to 441; sequence RLMLGTEQRV…ANSLRGEIVR (64 aa).

Belongs to the methylthiotransferase family. MiaB subfamily. As to quaternary structure, monomer. The cofactor is [4Fe-4S] cluster.

Its subcellular location is the cytoplasm. It catalyses the reaction N(6)-dimethylallyladenosine(37) in tRNA + (sulfur carrier)-SH + AH2 + 2 S-adenosyl-L-methionine = 2-methylsulfanyl-N(6)-dimethylallyladenosine(37) in tRNA + (sulfur carrier)-H + 5'-deoxyadenosine + L-methionine + A + S-adenosyl-L-homocysteine + 2 H(+). Its function is as follows. Catalyzes the methylthiolation of N6-(dimethylallyl)adenosine (i(6)A), leading to the formation of 2-methylthio-N6-(dimethylallyl)adenosine (ms(2)i(6)A) at position 37 in tRNAs that read codons beginning with uridine. This chain is tRNA-2-methylthio-N(6)-dimethylallyladenosine synthase, found in Vibrio vulnificus (strain YJ016).